Here is an 87-residue protein sequence, read N- to C-terminus: Exodeoxyribonuclease 7 small subunit (87 aa).

It belongs to the XseB family. As to quaternary structure, heterooligomer composed of large and small subunits.

The protein resides in the cytoplasm. The catalysed reaction is Exonucleolytic cleavage in either 5'- to 3'- or 3'- to 5'-direction to yield nucleoside 5'-phosphates.. Its function is as follows. Bidirectionally degrades single-stranded DNA into large acid-insoluble oligonucleotides, which are then degraded further into small acid-soluble oligonucleotides. This chain is Exodeoxyribonuclease 7 small subunit, found in Serratia proteamaculans (strain 568).